Here is a 151-residue protein sequence, read N- to C-terminus: Deoxyuridine 5'-triphosphate nucleotidohydrolase (151 aa).

Substrate contacts are provided by residues 70–72 (RSG), Asn-83, 87–89 (LID), and Met-97.

Belongs to the dUTPase family. Mg(2+) is required as a cofactor.

It catalyses the reaction dUTP + H2O = dUMP + diphosphate + H(+). It participates in pyrimidine metabolism; dUMP biosynthesis; dUMP from dCTP (dUTP route): step 2/2. In terms of biological role, this enzyme is involved in nucleotide metabolism: it produces dUMP, the immediate precursor of thymidine nucleotides and it decreases the intracellular concentration of dUTP so that uracil cannot be incorporated into DNA. This Pseudomonas entomophila (strain L48) protein is Deoxyuridine 5'-triphosphate nucleotidohydrolase.